Reading from the N-terminus, the 444-residue chain is Homogentisate 1,2-dioxygenase (444 aa).

Catalysis depends on H298, which acts as the Proton acceptor. Fe cation is bound by residues H341 and E347. Homogentisate contacts are provided by Y356 and H377. H377 lines the Fe cation pocket.

It belongs to the homogentisate dioxygenase family. In terms of assembly, hexamer; dimer of trimers. Requires Fe cation as cofactor.

The enzyme catalyses homogentisate + O2 = 4-maleylacetoacetate + H(+). It participates in amino-acid degradation; L-phenylalanine degradation; acetoacetate and fumarate from L-phenylalanine: step 4/6. Its function is as follows. Involved in the catabolism of homogentisate (2,5-dihydroxyphenylacetate or 2,5-OH-PhAc), a central intermediate in the degradation of phenylalanine and tyrosine. Catalyzes the oxidative ring cleavage of the aromatic ring of homogentisate to yield maleylacetoacetate. This chain is Homogentisate 1,2-dioxygenase, found in Burkholderia orbicola (strain MC0-3).